The sequence spans 125 residues: Glycine cleavage system H protein (125 aa).

One can recognise a Lipoyl-binding domain in the interval 19 to 101 (GAVVGITDFA…NGSGWFFKLT (83 aa)). N6-lipoyllysine is present on Lys60.

The protein belongs to the GcvH family. As to quaternary structure, the glycine cleavage system is composed of four proteins: P, T, L and H. Requires (R)-lipoate as cofactor.

The glycine cleavage system catalyzes the degradation of glycine. The H protein shuttles the methylamine group of glycine from the P protein to the T protein. In Methylocella silvestris (strain DSM 15510 / CIP 108128 / LMG 27833 / NCIMB 13906 / BL2), this protein is Glycine cleavage system H protein.